A 192-amino-acid polypeptide reads, in one-letter code: dTTP/UTP pyrophosphatase (192 aa).

The Proton acceptor role is filled by Asp71.

This sequence belongs to the Maf family. YhdE subfamily. Requires a divalent metal cation as cofactor.

The protein localises to the cytoplasm. The enzyme catalyses dTTP + H2O = dTMP + diphosphate + H(+). It carries out the reaction UTP + H2O = UMP + diphosphate + H(+). Nucleoside triphosphate pyrophosphatase that hydrolyzes dTTP and UTP. May have a dual role in cell division arrest and in preventing the incorporation of modified nucleotides into cellular nucleic acids. In Clostridium kluyveri (strain NBRC 12016), this protein is dTTP/UTP pyrophosphatase.